The following is a 524-amino-acid chain: Bifunctional purine biosynthesis protein PurH (524 aa).

Residues 1–145 enclose the MGS-like domain; that stretch reads MIQQALLSVS…KNHRDVTVIV (145 aa).

It belongs to the PurH family.

It carries out the reaction (6R)-10-formyltetrahydrofolate + 5-amino-1-(5-phospho-beta-D-ribosyl)imidazole-4-carboxamide = 5-formamido-1-(5-phospho-D-ribosyl)imidazole-4-carboxamide + (6S)-5,6,7,8-tetrahydrofolate. The enzyme catalyses IMP + H2O = 5-formamido-1-(5-phospho-D-ribosyl)imidazole-4-carboxamide. The protein operates within purine metabolism; IMP biosynthesis via de novo pathway; 5-formamido-1-(5-phospho-D-ribosyl)imidazole-4-carboxamide from 5-amino-1-(5-phospho-D-ribosyl)imidazole-4-carboxamide (10-formyl THF route): step 1/1. It participates in purine metabolism; IMP biosynthesis via de novo pathway; IMP from 5-formamido-1-(5-phospho-D-ribosyl)imidazole-4-carboxamide: step 1/1. The sequence is that of Bifunctional purine biosynthesis protein PurH from Ralstonia pickettii (strain 12J).